Reading from the N-terminus, the 216-residue chain is Urease operon 23 kDa accessory protein (216 aa).

Involved in the expression of hydrogenase activity. May be a regulatory gene affecting the expression of the hydrogenase operon or could be involved in the process of nickel incorporation into the hydrogenase apoenzyme. In Rhizobium meliloti (strain 1021) (Ensifer meliloti), this protein is Urease operon 23 kDa accessory protein.